The primary structure comprises 260 residues: Proteasome subunit alpha (260 aa).

Belongs to the peptidase T1A family. The 20S proteasome core is composed of 14 alpha and 14 beta subunits that assemble into four stacked heptameric rings, resulting in a barrel-shaped structure. The two inner rings, each composed of seven catalytic beta subunits, are sandwiched by two outer rings, each composed of seven alpha subunits. The catalytic chamber with the active sites is on the inside of the barrel. Has a gated structure, the ends of the cylinder being occluded by the N-termini of the alpha-subunits. Is capped at one or both ends by the proteasome regulatory ATPase, PAN.

It localises to the cytoplasm. Its activity is regulated as follows. The formation of the proteasomal ATPase PAN-20S proteasome complex, via the docking of the C-termini of PAN into the intersubunit pockets in the alpha-rings, triggers opening of the gate for substrate entry. Interconversion between the open-gate and close-gate conformations leads to a dynamic regulation of the 20S proteasome proteolysis activity. In terms of biological role, component of the proteasome core, a large protease complex with broad specificity involved in protein degradation. The protein is Proteasome subunit alpha of Thermococcus sp. (strain JCM 11816 / KS-1).